A 348-amino-acid polypeptide reads, in one-letter code: Holliday junction branch migration complex subunit RuvB (348 aa).

The interval 1–184 (MTLNRDMVSP…FGIVQRLEFY (184 aa)) is large ATPase domain (RuvB-L). ATP-binding residues include leucine 23, arginine 24, glycine 65, lysine 68, threonine 69, threonine 70, arginine 174, tyrosine 184, and arginine 221. Residue threonine 69 coordinates Mg(2+). A small ATPAse domain (RuvB-S) region spans residues 185–255 (AVDHLVLIVE…VAQKALDLLD (71 aa)). A head domain (RuvB-H) region spans residues 258–348 (SHGFDTMDRK…QEVSDLFPNE (91 aa)). Positions 294, 313, and 318 each coordinate DNA.

It belongs to the RuvB family. As to quaternary structure, homohexamer. Forms an RuvA(8)-RuvB(12)-Holliday junction (HJ) complex. HJ DNA is sandwiched between 2 RuvA tetramers; dsDNA enters through RuvA and exits via RuvB. An RuvB hexamer assembles on each DNA strand where it exits the tetramer. Each RuvB hexamer is contacted by two RuvA subunits (via domain III) on 2 adjacent RuvB subunits; this complex drives branch migration. In the full resolvosome a probable DNA-RuvA(4)-RuvB(12)-RuvC(2) complex forms which resolves the HJ.

The protein resides in the cytoplasm. The enzyme catalyses ATP + H2O = ADP + phosphate + H(+). Its function is as follows. The RuvA-RuvB-RuvC complex processes Holliday junction (HJ) DNA during genetic recombination and DNA repair, while the RuvA-RuvB complex plays an important role in the rescue of blocked DNA replication forks via replication fork reversal (RFR). RuvA specifically binds to HJ cruciform DNA, conferring on it an open structure. The RuvB hexamer acts as an ATP-dependent pump, pulling dsDNA into and through the RuvAB complex. RuvB forms 2 homohexamers on either side of HJ DNA bound by 1 or 2 RuvA tetramers; 4 subunits per hexamer contact DNA at a time. Coordinated motions by a converter formed by DNA-disengaged RuvB subunits stimulates ATP hydrolysis and nucleotide exchange. Immobilization of the converter enables RuvB to convert the ATP-contained energy into a lever motion, pulling 2 nucleotides of DNA out of the RuvA tetramer per ATP hydrolyzed, thus driving DNA branch migration. The RuvB motors rotate together with the DNA substrate, which together with the progressing nucleotide cycle form the mechanistic basis for DNA recombination by continuous HJ branch migration. Branch migration allows RuvC to scan DNA until it finds its consensus sequence, where it cleaves and resolves cruciform DNA. The chain is Holliday junction branch migration complex subunit RuvB from Nitrosococcus oceani (strain ATCC 19707 / BCRC 17464 / JCM 30415 / NCIMB 11848 / C-107).